The sequence spans 481 residues: Glutamyl-tRNA(Gln) amidotransferase subunit A (481 aa).

Active-site charge relay system residues include Lys74 and Ser149. Catalysis depends on Ser173, which acts as the Acyl-ester intermediate.

This sequence belongs to the amidase family. GatA subfamily. Heterotrimer of A, B and C subunits.

It catalyses the reaction L-glutamyl-tRNA(Gln) + L-glutamine + ATP + H2O = L-glutaminyl-tRNA(Gln) + L-glutamate + ADP + phosphate + H(+). In terms of biological role, allows the formation of correctly charged Gln-tRNA(Gln) through the transamidation of misacylated Glu-tRNA(Gln) in organisms which lack glutaminyl-tRNA synthetase. The reaction takes place in the presence of glutamine and ATP through an activated gamma-phospho-Glu-tRNA(Gln). This is Glutamyl-tRNA(Gln) amidotransferase subunit A from Francisella tularensis subsp. mediasiatica (strain FSC147).